A 715-amino-acid polypeptide reads, in one-letter code: Methionine--tRNA ligase (715 aa).

A 'HIGH' region motif is present at residues 17–27 (PYANGPIHLGH). Residues C148, C151, C161, and C164 each coordinate Zn(2+). The 'KMSKS' region signature appears at 359-363 (KMSKS). K362 is an ATP binding site. The region spanning 614 to 715 (DLSKVELRVG…KDAKPGDRLK (102 aa)) is the tRNA-binding domain.

The protein belongs to the class-I aminoacyl-tRNA synthetase family. MetG type 1 subfamily. As to quaternary structure, homodimer. Requires Zn(2+) as cofactor.

Its subcellular location is the cytoplasm. It carries out the reaction tRNA(Met) + L-methionine + ATP = L-methionyl-tRNA(Met) + AMP + diphosphate. Its function is as follows. Is required not only for elongation of protein synthesis but also for the initiation of all mRNA translation through initiator tRNA(fMet) aminoacylation. This Leptospira interrogans serogroup Icterohaemorrhagiae serovar copenhageni (strain Fiocruz L1-130) protein is Methionine--tRNA ligase.